The following is a 394-amino-acid chain: Candidapepsin (394 aa).

Residues Met-1–Gly-23 form the signal peptide. Positions Leu-24 to Arg-60 are cleaved as a propeptide — activation peptide. N-linked (GlcNAc...) asparagine glycosylation occurs at Asn-50. A Peptidase A1 domain is found at Tyr-74–Ala-381. Asp-92 is a catalytic residue. Cysteines 107 and 119 form a disulfide. Residue Asp-278 is part of the active site. Cys-314 and Cys-347 are disulfide-bonded.

This sequence belongs to the peptidase A1 family. Post-translationally, O-glycosylated.

Its subcellular location is the secreted. The catalysed reaction is Preferential cleavage at the carboxyl of hydrophobic amino acids, but fails to cleave 15-Leu-|-Tyr-16, 16-Tyr-|-Leu-17 and 24-Phe-|-Phe-25 of insulin B chain. Activates trypsinogen, and degrades keratin.. The polypeptide is Candidapepsin (SAPT1) (Candida tropicalis (Yeast)).